The chain runs to 292 residues: Elongation factor Ts (292 aa).

The segment at T79–V82 is involved in Mg(2+) ion dislocation from EF-Tu.

The protein belongs to the EF-Ts family.

Its subcellular location is the cytoplasm. Associates with the EF-Tu.GDP complex and induces the exchange of GDP to GTP. It remains bound to the aminoacyl-tRNA.EF-Tu.GTP complex up to the GTP hydrolysis stage on the ribosome. The polypeptide is Elongation factor Ts (tsf) (Idiomarina loihiensis (strain ATCC BAA-735 / DSM 15497 / L2-TR)).